The primary structure comprises 293 residues: Acetylglutamate kinase (293 aa).

Substrate-binding positions include 68 to 69 (GG), R90, and N189.

It belongs to the acetylglutamate kinase family. ArgB subfamily.

The protein resides in the cytoplasm. The catalysed reaction is N-acetyl-L-glutamate + ATP = N-acetyl-L-glutamyl 5-phosphate + ADP. It functions in the pathway amino-acid biosynthesis; L-arginine biosynthesis; N(2)-acetyl-L-ornithine from L-glutamate: step 2/4. Functionally, catalyzes the ATP-dependent phosphorylation of N-acetyl-L-glutamate. This chain is Acetylglutamate kinase, found in Caldicellulosiruptor bescii (strain ATCC BAA-1888 / DSM 6725 / KCTC 15123 / Z-1320) (Anaerocellum thermophilum).